Reading from the N-terminus, the 532-residue chain is Copalyl diphosphate synthase (532 aa).

The short motif at 313-318 (DTDDTA) is the DXDDTA motif element. The QXXDGSW motif signature appears at 443 to 449 (QSDDGSW).

Belongs to the terpene synthase family. Requires Mg(2+) as cofactor.

It carries out the reaction (2E,6E,10E)-geranylgeranyl diphosphate = (+)-copalyl diphosphate. Involved in the biosynthesis of the mercapturic acid derivative diterpene cyslabdan A, a potentiator of the beta-lactam antibiotic imipenem. Catalyzes the conversion of geranylgeranyl diphosphate (GGDP) into (+)-copalyl diphosphate. The polypeptide is Copalyl diphosphate synthase (Streptomyces cyslabdanicus).